Reading from the N-terminus, the 353-residue chain is Survival factor 2 (353 aa).

Belongs to the SVF1 family.

The protein resides in the cytoplasm. It is found in the nucleus. The polypeptide is Survival factor 2 (svf2) (Schizosaccharomyces pombe (strain 972 / ATCC 24843) (Fission yeast)).